The chain runs to 429 residues: Actin-like protein 6A (429 aa).

Ser-2 is subject to N-acetylserine. Lys-62 participates in a covalent cross-link: Glycyl lysine isopeptide (Lys-Gly) (interchain with G-Cter in SUMO2). A phosphoserine mark is found at Ser-86 and Ser-233.

Belongs to the actin family. Component of numerous complexes with chromatin remodeling and histone acetyltransferase activity. Component of the NuA4 histone acetyltransferase complex which contains the catalytic subunit KAT5/TIP60 and the subunits EP400, TRRAP/PAF400, BRD8/SMAP, EPC1, DMAP1/DNMAP1, RUVBL1/TIP49, RUVBL2, ING3, actin, ACTL6A/BAF53A, MORF4L1/MRG15, MORF4L2/MRGX, MRGBP, YEATS4/GAS41, VPS72/YL1 and MEAF6. The NuA4 complex interacts with MYC and the adenovirus E1A protein. Component of a NuA4-related complex which contains EP400, TRRAP/PAF400, SRCAP, BRD8/SMAP, EPC1, DMAP1/DNMAP1, RUVBL1/TIP49, RUVBL2, actin, ACTL6A/BAF53A, VPS72 and YEATS4/GAS41. Component of the multiprotein chromatin-remodeling complexes SWI/SNF: SWI/SNF-A (BAF), SWI/SNF-B (PBAF) and related complexes. The canonical complex contains a catalytic subunit (either SMARCA4/BRG1/BAF190A or SMARCA2/BRM/BAF190B) and at least SMARCE1, ACTL6A/BAF53, SMARCC1/BAF155, SMARCC2/BAF170, and SMARCB1/SNF5/BAF47. Other subunits specific to each of the complexes may also be present permitting several possible combinations developmentally and tissue specific. Component of the BAF complex, which includes at least actin (ACTB), ARID1A/BAF250A, ARID1B/BAF250B, SMARCA2/BRM, SMARCA4/BRG1/BAF190A, ACTL6A/BAF53, ACTL6B/BAF53B, SMARCE1/BAF57, SMARCC1/BAF155, SMARCC2/BAF170, SMARCB1/SNF5/INI1, and one or more SMARCD1/BAF60A, SMARCD2/BAF60B, or SMARCD3/BAF60C. In muscle cells, the BAF complex also contains DPF3. Component of the BAF53 complex, at least composed of ACTL6A/BAF53A, RUVBL1/TIP49, SMARCA2/BRM/BAF190B and TRRAP/PAF400, and which may also include a HAT activity related to, but distinct from, that of KAT5. Component of neural progenitors-specific chromatin remodeling complex (npBAF complex) composed of at least, ARID1A/BAF250A or ARID1B/BAF250B, SMARCD1/BAF60A, SMARCD3/BAF60C, SMARCA2/BRM/BAF190B, SMARCA4/BRG1/BAF190A, SMARCB1/BAF47, SMARCC1/BAF155, SMARCE1/BAF57, SMARCC2/BAF170, PHF10/BAF45A, ACTL6A/BAF53A and actin. Component of SWI/SNF (GBAF) subcomplex, which includes at least BICRA or BICRAL (mutually exclusive), BRD9, SS18, SMARCA2/BRM, SMARCA4/BRG1/BAF190A, ACTL6A/BAF53, SMARCC1/BAF155, and SMARCD1/BAF60A. May be a component of the SWI/SNF-B (PBAF) chromatin remodeling complex, at least composed of SMARCA4/BRG1, SMARCB1/BAF47/SNF5, ACTL6A/BAF53A or ACTL6B/BAF53B, SMARCE1/BAF57, SMARCD1/BAF60A, SMARCD2/BAF60B, perhaps SMARCD3/BAF60C, SMARCC1/BAF155, SMARCC2/BAF170, PBRM1/BAF180, ARID2/BAF200 and actin. Interacts with SMARCA4/BRG1/BAF190A. Interacts with PHF10/BAF45A. Component of the chromatin remodeling INO80 complex; specifically part of a complex module associated with the DBINO domain of INO80. Interacts with DPF2. Widely expressed. Expressed selectively in neural stem and progenitor cells (at protein level).

The protein localises to the nucleus. In terms of biological role, involved in transcriptional activation and repression of select genes by chromatin remodeling (alteration of DNA-nucleosome topology). Component of SWI/SNF chromatin remodeling complexes that carry out key enzymatic activities, changing chromatin structure by altering DNA-histone contacts within a nucleosome in an ATP-dependent manner. Required for maximal ATPase activity of SMARCA4/BRG1/BAF190A and for association of the SMARCA4/BRG1/BAF190A containing remodeling complex BAF with chromatin/nuclear matrix. Belongs to the neural progenitors-specific chromatin remodeling complex (npBAF complex) and is required for the proliferation of neural progenitors. During neural development a switch from a stem/progenitor to a postmitotic chromatin remodeling mechanism occurs as neurons exit the cell cycle and become committed to their adult state. The transition from proliferating neural stem/progenitor cells to postmitotic neurons requires a switch in subunit composition of the npBAF and nBAF complexes. As neural progenitors exit mitosis and differentiate into neurons, npBAF complexes which contain ACTL6A/BAF53A and PHF10/BAF45A, are exchanged for homologous alternative ACTL6B/BAF53B and DPF1/BAF45B or DPF3/BAF45C subunits in neuron-specific complexes (nBAF). The npBAF complex is essential for the self-renewal/proliferative capacity of the multipotent neural stem cells. The nBAF complex along with CREST plays a role regulating the activity of genes essential for dendrite growth. Component of the NuA4 histone acetyltransferase (HAT) complex which is involved in transcriptional activation of select genes principally by acetylation of nucleosomal histones H4 and H2A. This modification may both alter nucleosome - DNA interactions and promote interaction of the modified histones with other proteins which positively regulate transcription. This complex may be required for the activation of transcriptional programs associated with oncogene and proto-oncogene mediated growth induction, tumor suppressor mediated growth arrest and replicative senescence, apoptosis, and DNA repair. NuA4 may also play a direct role in DNA repair when recruited to sites of DNA damage. Putative core component of the chromatin remodeling INO80 complex which is involved in transcriptional regulation, DNA replication and probably DNA repair. This Mus musculus (Mouse) protein is Actin-like protein 6A (Actl6a).